The sequence spans 148 residues: Lipid droplet organization protein LDO16 (148 aa).

Residues 1–7 are Cytoplasmic-facing; sequence MVSTATF. Residues 8-28 form a helical membrane-spanning segment; that stretch reads FFFVYLTLFVVIGFFSSLFII. Residue Pro-29 is a topological domain, lumenal. A helical membrane pass occupies residues 30–50; it reads LLGISFVFAIGVVSFGFCSNM. At 51-148 the chain is on the cytoplasmic side; sequence SFKMAQLIYV…NKAGNKFQLS (98 aa). The segment at 83–110 is disordered; it reads QEPQEPLSTLRPVSNPTIPSPLRQTARP. Over residues 93–109 the composition is skewed to polar residues; sequence RPVSNPTIPSPLRQTAR. Position 102 is a phosphoserine (Ser-102).

This sequence belongs to the OSW5 family. In terms of assembly, interacts specifically with the seipin complex FLD1-LDB16. Only a fraction appears to associate with the seipin core components, suggesting that it may be an ancillary subunit of the complex. Found to interact with many mitochondrial and peroxisomal proteins.

The protein resides in the endoplasmic reticulum membrane. It localises to the lipid droplet. Functionally, involved in lipid droplet (LD) organization. Functions primarily upon nutrient depletion, facilitating LD consumption by lipophagy. Required for correct LD distribution during entry into stationary phase, where LDs accumulate at nucleus-vacuole junction (NVJ) contact sites. Involved in membrane interaction in a manner similar to those of SNARE proteins, binding to partners present in mitochondria or peroxisomes. Its partner on the mitochondrion side might be TOM22, a mitochondrial outer membrane protein, linking lipid droplets and mitochondria by protein-protein interaction. Involved in spore wall assembly. In Saccharomyces cerevisiae (strain ATCC 204508 / S288c) (Baker's yeast), this protein is Lipid droplet organization protein LDO16.